The primary structure comprises 258 residues: Ferredoxin--NADP reductase (258 aa).

The FAD-binding FR-type domain occupies Ser-2 to Asp-102. FAD contacts are provided by Arg-51, Ala-52, Tyr-53, Ser-54, Phe-67, Ile-69, Leu-76, Thr-77, and Thr-117. Residues Val-144, Arg-145, Thr-181, Arg-182, Arg-190, Ser-223, Glu-227, Phe-255, and Glu-257 each coordinate NADP(+). 3 residues coordinate FAD: Phe-255, Glu-257, and Lys-258.

This sequence belongs to the ferredoxin--NADP reductase type 1 family. As to quaternary structure, monomer. The cofactor is FAD.

It catalyses the reaction 2 reduced [2Fe-2S]-[ferredoxin] + NADP(+) + H(+) = 2 oxidized [2Fe-2S]-[ferredoxin] + NADPH. Its function is as follows. Transports electrons between ferredoxin and NADPH. Provides electrons to heme oxygenase (pigA) allowing anaerobic heme degradation. Provides electrons necessary to reduce and mobilize Fe(3+) in a heterooligomeric bacterioferritin (BFR) complex to Fe(2+). Reduction of Fe(3+) in a pure FtnA BFR does not require Bfd. Reduction of Fe(3+) in a pure BfrB BFR does require Bfd. This Pseudomonas aeruginosa (strain ATCC 15692 / DSM 22644 / CIP 104116 / JCM 14847 / LMG 12228 / 1C / PRS 101 / PAO1) protein is Ferredoxin--NADP reductase.